The primary structure comprises 949 residues: Protocadherin alpha-11 (949 aa).

An N-terminal signal peptide occupies residues Met-1–Gly-29. 6 consecutive Cadherin domains span residues Gln-30 to Phe-133, Ala-157 to Phe-242, Asp-243 to Val-349, Ala-350 to Phe-454, Ala-455 to Leu-564, and Val-580 to Ala-677. The Extracellular segment spans residues Gln-30–Asn-696. Asn-265 and Asn-304 each carry an N-linked (GlcNAc...) asparagine glycan. The N-linked (GlcNAc...) asparagine glycan is linked to Asn-547. A helical membrane pass occupies residues Val-697–Tyr-717. The Cytoplasmic portion of the chain corresponds to Thr-718 to Gln-949. PXXP repeat units lie at residues Pro-733–Pro-736 and Pro-773–Pro-776. The 6 X 4 AA repeats of P-X-X-P stretch occupies residues Pro-733–Pro-893. Disordered regions lie at residues Arg-753–Tyr-807 and Ile-826–Gln-949. A compositionally biased stretch (basic and acidic residues) spans Asn-780 to Glu-789. PXXP repeat units follow at residues Pro-795 to Pro-798, Pro-831 to Pro-834, Pro-872 to Pro-875, and Pro-890 to Pro-893. The span at Asp-908–Lys-922 shows a compositional bias: basic and acidic residues.

Its subcellular location is the cell membrane. In terms of biological role, potential calcium-dependent cell-adhesion protein. May be involved in the establishment and maintenance of specific neuronal connections in the brain. The sequence is that of Protocadherin alpha-11 (PCDHA11) from Homo sapiens (Human).